Reading from the N-terminus, the 1137-residue chain is Ribonucleoside-diphosphate reductase large subunit (1137 aa).

A disordered region spans residues 1–32 (MASRPAASSPVEARAPVGGQEAGGPSAATQGE). The RIP homotypic interaction motif (RHIM) motif lies at 64–84 (SYRISDNNFVQCGSNCTMIID). 2 disordered regions span residues 124-159 (GGTP…FTLG) and 173-315 (AVFG…YPVP). Residues 131 to 141 (AGTSTGTQTAD) are compositionally biased toward polar residues. Residues 196–206 (SDSDDSEDTDS) are compositionally biased toward acidic residues. Residues 281 to 290 (AGAGLAADPA) show a composition bias toward low complexity. Over residues 291–304 (VARDDAEGLSDPRP) the composition is skewed to basic and acidic residues. Substrate contacts are provided by residues Thr-566, 581-582 (SC), Gly-612, 791-795 (NLCTE), and 968-972 (PTAAS). Cys-582 and Cys-808 are disulfide-bonded. Asn-791 (proton acceptor) is an active-site residue. Cys-793 serves as the catalytic Cysteine radical intermediate. Glu-795 functions as the Proton acceptor in the catalytic mechanism.

It belongs to the ribonucleoside diphosphate reductase large chain family. As to quaternary structure, heterotetramer composed of a homodimer of the large subunit (R1) and a homodimer of the small subunit (R2). Larger multisubunit protein complex are also active, composed of (R1)n(R2)n. Self-assembles (via RIP homotypic interaction motif/RHIM) into homomeric fibrillar amyloid structures. Interacts (via RHIM) with human RIPK1 (via RHIM). Interacts (via RHIM) with human RIPK3 (via RHIM); the interaction leads to heteromeric amyloid assemblies. Interacts (via RHIM) with human ZBP1 (via RHIM); the interaction leads to heteromeric amyloid assemblies. Interacts (via C-terminus) with host CASP8.

It catalyses the reaction a 2'-deoxyribonucleoside 5'-diphosphate + [thioredoxin]-disulfide + H2O = a ribonucleoside 5'-diphosphate + [thioredoxin]-dithiol. Functionally, ribonucleoside-diphosphate reductase holoenzyme that provides the precursors necessary for viral DNA synthesis. Allows virus growth in non-dividing cells, as well as reactivation from latency in infected hosts. Catalyzes the biosynthesis of deoxyribonucleotides from the corresponding ribonucleotides. Prevents host necroptosis by targeting host RIPK1 and RIPK3, thereby hampering the formation of necroptotic RIPK1-RIPK3 complexes. Forms hetero-amyloid structures with host proteins RIPK3 or ZBP1 which may prevent RIPK3- and ZBP1-mediated necroptosis. In addition, inhibits extrinsic apoptosis by targeting host CASP8. This chain is Ribonucleoside-diphosphate reductase large subunit, found in Human herpesvirus 1 (strain 17) (HHV-1).